The primary structure comprises 1286 residues: CLIP-associating protein 2 (1286 aa).

The golgi localization stretch occupies residues 1–40 (MRRLICKRICDYKSFDDEESVDGNRPSSAASAFKVPAPKT). Residues Ser14 and Ser20 each carry the phosphoserine modification. The interval 17 to 67 (DEESVDGNRPSSAASAFKVPAPKTPGNPVSSARKPGSAGGPKVGGPSKEGG) is disordered. The segment covering 53–67 (SAGGPKVGGPSKEGG) has biased composition (gly residues). Residues 66–317 (GGAGAVDEDD…KSLQTYLKSS (252 aa)) are TOG 1. HEAT repeat units lie at residues 179 to 214 (HGAEAIVPTLFNLVPNSAKVMATSGCAAIRFIIRHT), 215 to 251 (HVPRLIPLITSNCTSKSVPVRRRSFEFLDLLLQEWQT), and 256 to 293 (RHAAVLVETIKKGIHDADAEARVEARKTYMGLRNHFPG). Residues 320 to 374 (VASLPQSDRSSSSSQESLNRPFSSKWSTANPSTVAGRVSVGGSKANPLPGSLQRS) form a disordered region. Residues Ser322, Ser333, and Ser336 each carry the phosphoserine modification. Residues 322-340 (SLPQSDRSSSSSQESLNRP) show a composition bias toward low complexity. Positions 341-352 (FSSKWSTANPST) are enriched in polar residues. Phosphoserine is present on residues Ser374, Ser376, and Ser413. The segment at 411 to 473 (YASLEDTSDK…GSRSGSPGRV (63 aa)) is disordered. Residues 417-431 (TSDKMDGTASDDGRV) show a composition bias toward basic and acidic residues. Positions 450–565 (RGRSRTKMVS…GPGYGISQSS (116 aa)) are interaction with microtubules, MAPRE1 and MAPRE3. The span at 459 to 473 (SQSQPGSRSGSPGRV) shows a compositional bias: low complexity. Phosphoserine occurs at positions 461, 465, 469, 484, and 495. The disordered stretch occupies residues 493-564 (SASAQKRSKI…LGPGYGISQS (72 aa)). Residues 500-503 (SKIP) carry the SXIP motif 1; mediates interaction with MAPRE1 and targeting to microtubule plus ends motif. Position 513 is a phosphoserine (Ser513). The short motif at 523-526 (SRIP) is the SXIP motif 2; mediates interaction with MAPRE1 and targeting to microtubule plus ends element. Residues Ser531, Ser535, Ser570, Ser572, Ser581, Ser614, and Ser620 each carry the phosphoserine modification. Residues 605–616 (RRYESYGMHSDD) show a composition bias toward basic and acidic residues. Residues 605-638 (RRYESYGMHSDDDANSDASSACSERSYSSRNGSI) form a disordered region. Residues 620 to 634 (SDASSACSERSYSSR) show a composition bias toward low complexity. The interval 642–873 (MRQTEDVAEV…TKLLHNHLRN (232 aa)) is TOG 2. 2 HEAT repeats span residues 702-739 (KVFSMFLETLVDFIQVHKDDLQDWLFVLLTQLLKKMGA) and 764-801 (LQFNILMRFTVDQTQTPSLKVKVAILKYIETLAKQMDP). Phosphothreonine is present on Thr779. Residues 864–1286 (TKLLHNHLRN…DPTADVSGQS (423 aa)) form an interaction with RSN and localization to the Golgi and kinetochores region. Disordered stretches follow at residues 870 to 920 (HLRN…FDYD) and 944 to 989 (SFRS…SQPA). 2 stretches are compositionally biased toward polar residues: residues 872-884 (RNTGNGTQSSMGS) and 893-914 (SPANWSSPLTSPTNTSQNTLSP). Ser884 carries the post-translational modification Phosphoserine. Phosphoserine is present on residues Ser944, Ser947, Ser1005, and Ser1021. Over residues 947-964 (SQEDMSEPVRRDPKKEDG) the composition is skewed to basic and acidic residues. Residues 1009-1286 (RDYNPYNYSD…DPTADVSGQS (278 aa)) form a required for cortical localization region. 3 HEAT repeats span residues 1046 to 1083 (LDHSDLVAELLKELSNHNERIEERKIALYELMKLTQEE), 1090 to 1127 (EHFKTILLLLLETLGDKEPTIRALALKVLKEILRHQPA), and 1208 to 1245 (MLLPEIMPGLIQGYDNSESSVRKACVFCLVAVHAVIGD).

This sequence belongs to the CLASP family. Interacts with microtubules. Interacts with MAPRE1; probably required for targeting to growing microtubule plus ends. Interacts with ERC1, MAPRE3 and PHLDB2. The interaction with ERC1 may be mediated by PHLDB2. Interacts with GCC2; recruits CLASP2 to Golgi membranes. Interacts with CLIP2 and RSN. Interacts with MACF1. Interacts with mtcl2. Interacts with MTCL1. Phosphorylated by GSK3B. Phosphorylation by GSK3B may negatively regulate binding to microtubule lattices in lamella. Isoform 2 is phosphorylated on Ser-241. As to expression, highly expressed in brain and at low levels in heart, kidney and lung.

It localises to the cytoplasm. The protein localises to the cytoskeleton. Its subcellular location is the microtubule organizing center. The protein resides in the centrosome. It is found in the chromosome. It localises to the centromere. The protein localises to the kinetochore. Its subcellular location is the spindle. The protein resides in the spindle pole. It is found in the golgi apparatus. It localises to the trans-Golgi network. The protein localises to the cell membrane. Its subcellular location is the cell projection. The protein resides in the ruffle membrane. It is found in the cell cortex. Functionally, microtubule plus-end tracking protein that promotes the stabilization of dynamic microtubules. Involved in the nucleation of noncentrosomal microtubules originating from the trans-Golgi network (TGN). Required for the polarization of the cytoplasmic microtubule arrays in migrating cells towards the leading edge of the cell. May act at the cell cortex to enhance the frequency of rescue of depolymerizing microtubules by attaching their plus-ends to cortical platforms composed of ERC1 and PHLDB2. This cortical microtubule stabilizing activity is regulated at least in part by phosphatidylinositol 3-kinase signaling. Also performs a similar stabilizing function at the kinetochore which is essential for the bipolar alignment of chromosomes on the mitotic spindle. Acts as a mediator of ERBB2-dependent stabilization of microtubules at the cell cortex. This Mus musculus (Mouse) protein is CLIP-associating protein 2 (Clasp2).